Reading from the N-terminus, the 323-residue chain is Beta-ketoacyl-[acyl-carrier-protein] synthase III (323 aa).

Residues Cys114 and His250 contribute to the active site. The ACP-binding stretch occupies residues 251–255 (QANLR). Asn280 is an active-site residue.

This sequence belongs to the thiolase-like superfamily. FabH family. As to quaternary structure, homodimer.

The protein resides in the cytoplasm. It carries out the reaction malonyl-[ACP] + acetyl-CoA + H(+) = 3-oxobutanoyl-[ACP] + CO2 + CoA. It participates in lipid metabolism; fatty acid biosynthesis. Functionally, catalyzes the condensation reaction of fatty acid synthesis by the addition to an acyl acceptor of two carbons from malonyl-ACP. Catalyzes the first condensation reaction which initiates fatty acid synthesis and may therefore play a role in governing the total rate of fatty acid production. Possesses both acetoacetyl-ACP synthase and acetyl transacylase activities. Its substrate specificity determines the biosynthesis of branched-chain and/or straight-chain of fatty acids. This Cereibacter sphaeroides (strain ATCC 17029 / ATH 2.4.9) (Rhodobacter sphaeroides) protein is Beta-ketoacyl-[acyl-carrier-protein] synthase III.